Consider the following 87-residue polypeptide: Small archaeal modifier protein 1 (87 aa).

1-thioglycine; alternate is present on Gly87. Position 87 is a glycyl adenylate; alternate (Gly87). Gly87 is covalently cross-linked (Glycyl lysine isopeptide (Gly-Lys) (interchain with K-? in acceptor proteins); alternate).

The C-terminal glycine is likely acyl-adenylated (-COAMP) by UbaA, and also probably thiocarboxylated (-COSH) to function in sulfur transfer.

Functions as a protein modifier covalently attached to lysine residues of substrate proteins, as well as a sulfur carrier in molybdenum cofactor (MoCo) biosynthesis. The protein modification process is termed sampylation and involves the formation of an isopeptide bond between the SAMP1 C-terminal glycine carboxylate and the epsilon-amino group of lysine residues on target proteins. May serve as a proteolytic signal in the cell to target proteins for degradation by proteasomes. The protein is Small archaeal modifier protein 1 (samp1) of Haloferax volcanii (strain ATCC 29605 / DSM 3757 / JCM 8879 / NBRC 14742 / NCIMB 2012 / VKM B-1768 / DS2) (Halobacterium volcanii).